Reading from the N-terminus, the 238-residue chain is Fatty acid metabolism regulator protein (238 aa).

The HTH gntR-type domain maps to 6 to 74 (KGPASFAEKY…HGKPTRVNNF (69 aa)). The segment at residues 34 to 53 (ERELSELIGVTRTTLREVLQ) is a DNA-binding region (H-T-H motif).

Homodimer.

The protein resides in the cytoplasm. In terms of biological role, multifunctional regulator of fatty acid metabolism. This Shewanella putrefaciens (strain CN-32 / ATCC BAA-453) protein is Fatty acid metabolism regulator protein.